Reading from the N-terminus, the 249-residue chain is 2,3-bisphosphoglycerate-dependent phosphoglycerate mutase (249 aa).

Substrate-binding positions include 8-15 (RHGESTWN), 21-22 (TG), R60, 87-90 (ERHY), K98, 114-115 (RR), and 183-184 (GN). The active-site Tele-phosphohistidine intermediate is H9. Residue E87 is the Proton donor/acceptor of the active site.

The protein belongs to the phosphoglycerate mutase family. BPG-dependent PGAM subfamily. In terms of assembly, homodimer.

It carries out the reaction (2R)-2-phosphoglycerate = (2R)-3-phosphoglycerate. It functions in the pathway carbohydrate degradation; glycolysis; pyruvate from D-glyceraldehyde 3-phosphate: step 3/5. In terms of biological role, catalyzes the interconversion of 2-phosphoglycerate and 3-phosphoglycerate. The polypeptide is 2,3-bisphosphoglycerate-dependent phosphoglycerate mutase (Azoarcus sp. (strain BH72)).